A 440-amino-acid chain; its full sequence is GTPase Obg (440 aa).

The region spanning 5–163 (STFVDQTKIE…RTLRLELKVL (159 aa)) is the Obg domain. The OBG-type G domain maps to 164–338 (ADVGLVGFPS…LMSRAADLVS (175 aa)). GTP is bound by residues 170 to 177 (GFPSVGKS), 195 to 199 (FTTLK), 217 to 220 (DLPG), 288 to 291 (SQMD), and 319 to 321 (SSV). Mg(2+)-binding residues include serine 177 and threonine 197. The OCT domain maps to 362–440 (YHRPEKMEFT…IGDFSFEFVQ (79 aa)).

It belongs to the TRAFAC class OBG-HflX-like GTPase superfamily. OBG GTPase family. As to quaternary structure, monomer. Mg(2+) is required as a cofactor.

The protein localises to the cytoplasm. Functionally, an essential GTPase which binds GTP, GDP and possibly (p)ppGpp with moderate affinity, with high nucleotide exchange rates and a fairly low GTP hydrolysis rate. Plays a role in control of the cell cycle, stress response, ribosome biogenesis and in those bacteria that undergo differentiation, in morphogenesis control. This chain is GTPase Obg, found in Lactobacillus delbrueckii subsp. bulgaricus (strain ATCC 11842 / DSM 20081 / BCRC 10696 / JCM 1002 / NBRC 13953 / NCIMB 11778 / NCTC 12712 / WDCM 00102 / Lb 14).